A 467-amino-acid chain; its full sequence is Ribulose bisphosphate carboxylase large chain (467 aa).

The propeptide occupies 1 to 2; it reads MS. P3 is modified (N-acetylproline). N6,N6,N6-trimethyllysine is present on K14. Positions 123 and 173 each coordinate substrate. The active-site Proton acceptor is K175. K177 provides a ligand contact to substrate. Mg(2+) contacts are provided by K201, D203, and E204. N6-carboxylysine is present on K201. H294 serves as the catalytic Proton acceptor. Substrate is bound by residues R295, H327, and S379.

Belongs to the RuBisCO large chain family. Type I subfamily. In terms of assembly, heterohexadecamer of 8 large chains and 8 small chains; disulfide-linked. The disulfide link is formed within the large subunit homodimers. Mg(2+) serves as cofactor. Post-translationally, the disulfide bond which can form in the large chain dimeric partners within the hexadecamer appears to be associated with oxidative stress and protein turnover.

The protein localises to the plastid. It is found in the chloroplast. It carries out the reaction 2 (2R)-3-phosphoglycerate + 2 H(+) = D-ribulose 1,5-bisphosphate + CO2 + H2O. It catalyses the reaction D-ribulose 1,5-bisphosphate + O2 = 2-phosphoglycolate + (2R)-3-phosphoglycerate + 2 H(+). Its function is as follows. RuBisCO catalyzes two reactions: the carboxylation of D-ribulose 1,5-bisphosphate, the primary event in carbon dioxide fixation, as well as the oxidative fragmentation of the pentose substrate in the photorespiration process. Both reactions occur simultaneously and in competition at the same active site. The chain is Ribulose bisphosphate carboxylase large chain from Phoenix reclinata (Senegal date palm).